The chain runs to 253 residues: DnaJ homolog subfamily C member 8 (253 aa).

Alanine 2 carries the N-acetylalanine modification. Serine 35 carries the post-translational modification Phosphoserine. The J domain occupies asparagine 57–glutamine 124. N6-acetyllysine is present on lysine 146. Positions glutamate 181–serine 222 are enriched in basic and acidic residues. The interval glutamate 181–glutamate 253 is disordered. 2 consecutive short sequence motifs (nuclear localization signal) follow at residues lysine 189–arginine 192 and lysine 203–arginine 206. Position 222 is a phosphoserine (serine 222). The span at lysine 231 to threonine 240 shows a compositional bias: basic residues. The segment at glycine 232 to glutamate 253 is essential for polyglutamine aggregation suppression.

Interacts with SRPK1. Interacts with HSP70 (HSPA1A or HSPA1B). As to expression, ubiquitous.

It is found in the nucleus. Suppresses polyglutamine (polyQ) aggregation of ATXN3 in neuronal cells. This is DnaJ homolog subfamily C member 8 (DNAJC8) from Homo sapiens (Human).